An 872-amino-acid polypeptide reads, in one-letter code: Alanine--tRNA ligase (872 aa).

Zn(2+) is bound by residues histidine 567, histidine 571, cysteine 669, and histidine 673.

Belongs to the class-II aminoacyl-tRNA synthetase family. Zn(2+) is required as a cofactor.

It is found in the cytoplasm. The catalysed reaction is tRNA(Ala) + L-alanine + ATP = L-alanyl-tRNA(Ala) + AMP + diphosphate. Catalyzes the attachment of alanine to tRNA(Ala) in a two-step reaction: alanine is first activated by ATP to form Ala-AMP and then transferred to the acceptor end of tRNA(Ala). Also edits incorrectly charged Ser-tRNA(Ala) and Gly-tRNA(Ala) via its editing domain. In Streptococcus agalactiae serotype III (strain NEM316), this protein is Alanine--tRNA ligase.